The chain runs to 176 residues: MSSKDQSRLPHEKGFHISWDQIHRDSRALAWRLDGQGPDEGAWRAVVAITRGGMAPAMIVARELDIRVVDTISVMSYHSGGGKADQRRDAKVLKAPDADMMGDGTGILIVDDLVDSGKTLELVRAQYPNAHFATVYAKPQGEPQVNTFITGVSQDTWIFFPWDMALQYVEPYRGTD.

5-phospho-alpha-D-ribose 1-diphosphate contacts are provided by residues arginine 51–glycine 52, arginine 88, and aspartate 111–threonine 119. Arginine 88 provides a ligand contact to GMP. Aspartate 112 contacts Mg(2+). Guanine-binding residues include aspartate 115 and isoleucine 158. Xanthine contacts are provided by aspartate 115 and isoleucine 158. Residues aspartate 115–threonine 119 and tryptophan 157–isoleucine 158 each bind GMP.

Belongs to the purine/pyrimidine phosphoribosyltransferase family. XGPT subfamily. In terms of assembly, homotetramer. Requires Mg(2+) as cofactor.

Its subcellular location is the cell inner membrane. The enzyme catalyses GMP + diphosphate = guanine + 5-phospho-alpha-D-ribose 1-diphosphate. The catalysed reaction is XMP + diphosphate = xanthine + 5-phospho-alpha-D-ribose 1-diphosphate. It catalyses the reaction IMP + diphosphate = hypoxanthine + 5-phospho-alpha-D-ribose 1-diphosphate. The protein operates within purine metabolism; GMP biosynthesis via salvage pathway; GMP from guanine: step 1/1. It functions in the pathway purine metabolism; XMP biosynthesis via salvage pathway; XMP from xanthine: step 1/1. Functionally, purine salvage pathway enzyme that catalyzes the transfer of the ribosyl-5-phosphate group from 5-phospho-alpha-D-ribose 1-diphosphate (PRPP) to the N9 position of the 6-oxopurines guanine and xanthine to form the corresponding ribonucleotides GMP (guanosine 5'-monophosphate) and XMP (xanthosine 5'-monophosphate), with the release of PPi. To a lesser extent, also acts on hypoxanthine. In Roseobacter denitrificans (strain ATCC 33942 / OCh 114) (Erythrobacter sp. (strain OCh 114)), this protein is Xanthine-guanine phosphoribosyltransferase.